We begin with the raw amino-acid sequence, 286 residues long: ATP synthase gamma chain (286 aa).

It belongs to the ATPase gamma chain family. F-type ATPases have 2 components, CF(1) - the catalytic core - and CF(0) - the membrane proton channel. CF(1) has five subunits: alpha(3), beta(3), gamma(1), delta(1), epsilon(1). CF(0) has three main subunits: a, b and c.

The protein resides in the cell inner membrane. Functionally, produces ATP from ADP in the presence of a proton gradient across the membrane. The gamma chain is believed to be important in regulating ATPase activity and the flow of protons through the CF(0) complex. The sequence is that of ATP synthase gamma chain from Pseudomonas aeruginosa (strain UCBPP-PA14).